A 60-amino-acid chain; its full sequence is Large ribosomal subunit protein uL30 (60 aa).

It belongs to the universal ribosomal protein uL30 family. Part of the 50S ribosomal subunit.

This chain is Large ribosomal subunit protein uL30, found in Kineococcus radiotolerans (strain ATCC BAA-149 / DSM 14245 / SRS30216).